We begin with the raw amino-acid sequence, 532 residues long: MVSINSGPISSFVSRYSMIDSDTLLHLSSFGSTFNPNYKAKACIRFARKVCGSTVLGFLEVKPRKKSCCSRCNGVSRMCNKRNLGWDSEGSKDLETEILEFMKNSEKPGMFPSKKDLIRSGRFDLVERIVNQGGWLSMGWDLDEQEEKVRVNENVTPQDLHIEKQLPNCNSPEMDKTLNHGDLDLSSNLSSSTEQVESRNDSGIEGILTRLEKERNLSLGISVRENGKSNGAMHDISPNGSVPWSSRIVTASEIQEVDGSRGSGEYAQSRYQGAKSVSGKPGLSDSPTSETWRTWSMRRAGFTDEDFEAAEISSSGLTGVKKDDTKKDSGDSMNGKDRIASSSEDVNKTHIKHRLQQLQSELSSVLHSLRSPPDKVVTSKDSETTAGNLENLSDDWEYKENEIIHAQNKLRSTRAKLAVLEGKMAMAIIDAQRIVREKQRRIDHASRALRLLRTASIVWPNSASEVLLTGSFDGWSTQRKMKKAENGVFSLSLKLYPGKYEIKFIVDGQWKVDPLRPIVTSGGYENNLLIIS.

Residues 1–71 (MVSINSGPIS…KPRKKSCCSR (71 aa)) constitute a chloroplast transit peptide. 4 disordered regions span residues 165 to 201 (QLPN…SRND), 256 to 292 (EVDG…SETW), 314 to 347 (SSGL…EDVN), and 367 to 388 (HSLR…TAGN). A compositionally biased stretch (basic and acidic residues) spans 173–183 (EMDKTLNHGDL). Basic and acidic residues predominate over residues 320–339 (VKKDDTKKDSGDSMNGKDRI). Positions 389 to 454 (LENLSDDWEY…ASRALRLLRT (66 aa)) form a coiled coil.

Interacts with PTST3 and SS4. Interacts with MFP1; the interaction is essential for the initiation of starch granules biosynthesis in leaf chloroplasts, for the correct location of the process in the stromal spaces between the thylakoid membranes, and for the association of this protein with the thylakoid membranes. Interacts with PII1/MRC; the interaction is essential for the initiation of starch granules biosynthesis in leaf chloroplasts.

Its subcellular location is the plastid. The protein resides in the chloroplast. It localises to the chloroplast thylakoid membrane. Functionally, involved in starch granule initiation in leaf chloroplasts. Binds and delivers suitable maltooligosaccharide substrates to starch synthase 4 (SS4). The sequence is that of Protein PTST homolog 2, chloroplastic from Arabidopsis thaliana (Mouse-ear cress).